The primary structure comprises 121 residues: DNA-directed RNA polymerase subunit omega (121 aa).

Belongs to the RNA polymerase subunit omega family. The RNAP catalytic core consists of 2 alpha, 1 beta, 1 beta' and 1 omega subunit. When a sigma factor is associated with the core the holoenzyme is formed, which can initiate transcription.

It catalyses the reaction RNA(n) + a ribonucleoside 5'-triphosphate = RNA(n+1) + diphosphate. Functionally, promotes RNA polymerase assembly. Latches the N- and C-terminal regions of the beta' subunit thereby facilitating its interaction with the beta and alpha subunits. This chain is DNA-directed RNA polymerase subunit omega, found in Syntrophobacter fumaroxidans (strain DSM 10017 / MPOB).